Reading from the N-terminus, the 156-residue chain is Small ribosomal subunit protein uS7 (156 aa).

It belongs to the universal ribosomal protein uS7 family. As to quaternary structure, part of the 30S ribosomal subunit. Contacts proteins S9 and S11.

One of the primary rRNA binding proteins, it binds directly to 16S rRNA where it nucleates assembly of the head domain of the 30S subunit. Is located at the subunit interface close to the decoding center, probably blocks exit of the E-site tRNA. The protein is Small ribosomal subunit protein uS7 of Sinorhizobium medicae (strain WSM419) (Ensifer medicae).